Here is a 490-residue protein sequence, read N- to C-terminus: E3 ubiquitin-protein ligase Hakai (490 aa).

Residues 34–60 are disordered; it reads QANKAKPAPRTQRTINRMPAKAPPGDE. An RING-type zinc finger spans residues 108–148; that stretch reads CDKCGLPIKIYGRMIPCKHVFCYDCAILHEKKGDKMCPGCS. The HYB domain stretch occupies residues 147-205; it reads CSDPVQRIEQCTRGSLFMCSIVQGCKRTYLSQRDLQAHINHRHMRAGKPVTRASLENVH. A C2H2-type zinc finger spans residues 163-189; that stretch reads FMCSIVQGCKRTYLSQRDLQAHINHRH. 3 positions are modified to phosphoserine: Ser200, Ser284, and Ser289. Residues 254-490 form a disordered region; the sequence is QPHEDIRAPP…DQTRYRPYYQ (237 aa). Pro residues-rich tracts occupy residues 341 to 358, 371 to 388, and 398 to 422; these read APPP…PHPP, APPP…PPPG, and MNHP…PPHH. A compositionally biased stretch (polar residues) spans 426–441; sequence NSLPQFTEDQGTLSPP. Over residues 456 to 477 the composition is skewed to pro residues; that stretch reads PRGPPPPPRLQGPPSQTPLPGP.

It belongs to the Hakai family. In terms of assembly, homodimer. Interacts with tyrosine-phosphorylated SRC substrates. Component of the WMM complex, a N6-methyltransferase complex composed of a catalytic subcomplex, named MAC, and of an associated subcomplex, named MACOM. The MAC subcomplex is composed of METTL3 and METTL14. The MACOM subcomplex is composed of WTAP, ZC3H13, CBLL1/HAKAI, VIRMA, and, in some cases of RBM15 (RBM15 or RBM15B). Also a component of a MACOM-like complex, named WTAP complex, composed of WTAP, ZC3H13, CBLL1, VIRMA, RBM15, BCLAF1 and THRAP3. Post-translationally, phosphorylated on tyrosine residues.

The protein localises to the nucleus speckle. It is found in the nucleus. It localises to the nucleoplasm. The protein resides in the cytoplasm. The catalysed reaction is S-ubiquitinyl-[E2 ubiquitin-conjugating enzyme]-L-cysteine + [acceptor protein]-L-lysine = [E2 ubiquitin-conjugating enzyme]-L-cysteine + N(6)-ubiquitinyl-[acceptor protein]-L-lysine.. Its pathway is protein modification; protein ubiquitination. Functionally, E3 ubiquitin-protein ligase that mediates ubiquitination of several tyrosine-phosphorylated Src substrates, including CDH1, CTTN and DOK1. Targets CDH1 for endocytosis and degradation. Associated component of the WMM complex, a complex that mediates N6-methyladenosine (m6A) methylation of RNAs, a modification that plays a role in the efficiency of mRNA splicing and RNA processing. Its function in the WMM complex is unknown. The chain is E3 ubiquitin-protein ligase Hakai from Macaca fascicularis (Crab-eating macaque).